The sequence spans 251 residues: Triosephosphate isomerase (251 aa).

Substrate is bound at residue 9–11; the sequence is NWK. His95 serves as the catalytic Electrophile. Catalysis depends on Glu167, which acts as the Proton acceptor. Substrate contacts are provided by residues Gly173, Ser213, and 234-235; that span reads GG. Ser213 carries the post-translational modification Phosphoserine.

It belongs to the triosephosphate isomerase family. In terms of assembly, homodimer.

The protein localises to the cytoplasm. The enzyme catalyses D-glyceraldehyde 3-phosphate = dihydroxyacetone phosphate. It functions in the pathway carbohydrate biosynthesis; gluconeogenesis. It participates in carbohydrate degradation; glycolysis; D-glyceraldehyde 3-phosphate from glycerone phosphate: step 1/1. Functionally, involved in the gluconeogenesis. Catalyzes stereospecifically the conversion of dihydroxyacetone phosphate (DHAP) to D-glyceraldehyde-3-phosphate (G3P). The protein is Triosephosphate isomerase of Anoxybacillus flavithermus (strain DSM 21510 / WK1).